The sequence spans 356 residues: sn-glycerol-3-phosphate import ATP-binding protein UgpC (356 aa).

The ABC transporter domain maps to 4-235; that stretch reads LKLQAVTKSW…PASLFVASFI (232 aa). 37-44 is an ATP binding site; sequence GPSGCGKS.

The protein belongs to the ABC transporter superfamily. sn-glycerol-3-phosphate importer (TC 3.A.1.1.3) family. In terms of assembly, the complex is composed of two ATP-binding proteins (UgpC), two transmembrane proteins (UgpA and UgpE) and a solute-binding protein (UgpB).

It is found in the cell inner membrane. It carries out the reaction sn-glycerol 3-phosphate(out) + ATP + H2O = sn-glycerol 3-phosphate(in) + ADP + phosphate + H(+). In terms of biological role, part of the ABC transporter complex UgpBAEC involved in sn-glycerol-3-phosphate (G3P) import. Responsible for energy coupling to the transport system. The polypeptide is sn-glycerol-3-phosphate import ATP-binding protein UgpC (Shigella sonnei (strain Ss046)).